The chain runs to 158 residues: NAD(P)H-quinone oxidoreductase subunit J, chloroplastic (158 aa).

The protein belongs to the complex I 30 kDa subunit family. In terms of assembly, NDH is composed of at least 16 different subunits, 5 of which are encoded in the nucleus.

The protein localises to the plastid. The protein resides in the chloroplast thylakoid membrane. It catalyses the reaction a plastoquinone + NADH + (n+1) H(+)(in) = a plastoquinol + NAD(+) + n H(+)(out). The enzyme catalyses a plastoquinone + NADPH + (n+1) H(+)(in) = a plastoquinol + NADP(+) + n H(+)(out). Functionally, NDH shuttles electrons from NAD(P)H:plastoquinone, via FMN and iron-sulfur (Fe-S) centers, to quinones in the photosynthetic chain and possibly in a chloroplast respiratory chain. The immediate electron acceptor for the enzyme in this species is believed to be plastoquinone. Couples the redox reaction to proton translocation, and thus conserves the redox energy in a proton gradient. The polypeptide is NAD(P)H-quinone oxidoreductase subunit J, chloroplastic (Drimys granadensis).